The primary structure comprises 397 residues: ATP-dependent RNA helicase eIF4A (397 aa).

The Q motif motif lies at 24–52; sequence DSFDEMNLKPELLRGIYAYGFERPSAIQQ. Residues 55-225 form the Helicase ATP-binding domain; that stretch reads IMPVIKGHDV…TKFMREPVRI (171 aa). 68–75 is an ATP binding site; that stretch reads AQSGTGKT. Positions 173–176 match the DEAD box motif; it reads DEAD. Residues 236-397 form the Helicase C-terminal domain; it reads GIKQFYIAVE…EMPMNVADLI (162 aa).

The protein belongs to the DEAD box helicase family. eIF4A subfamily. In terms of assembly, component of the eIF4F complex, which composition varies with external and internal environmental conditions. It is composed of at least eIF4A, eIF4E and eIF4G.

The protein localises to the cytoplasm. It catalyses the reaction ATP + H2O = ADP + phosphate + H(+). In terms of biological role, ATP-dependent RNA helicase which is a subunit of the eIF4F complex involved in cap recognition and is required for mRNA binding to ribosome. In the current model of translation initiation, eIF4A unwinds RNA secondary structures in the 5'-UTR of mRNAs which is necessary to allow efficient binding of the small ribosomal subunit, and subsequent scanning for the initiator codon. This Neurospora crassa (strain ATCC 24698 / 74-OR23-1A / CBS 708.71 / DSM 1257 / FGSC 987) protein is ATP-dependent RNA helicase eIF4A (tif-1).